The chain runs to 77 residues: Putative neurotoxin 1 (77 aa).

The signal sequence occupies residues 1-25; that stretch reads MKAFIVILSIAIVLLLIVSIKETSA. Residues 26 to 46 constitute a propeptide that is removed on maturation; it reads KDCKQECVKRYTKGDLTNFLK.

This sequence belongs to the scolopendra neurotoxin 3 family. In terms of processing, contains 2 disulfide bonds. In terms of tissue distribution, expressed by the venom gland.

Its subcellular location is the secreted. The protein is Putative neurotoxin 1 of Scolopendra subspinipes (Vietnamese centipede).